Here is a 525-residue protein sequence, read N- to C-terminus: Glutamate--cysteine ligase (525 aa).

It belongs to the glutamate--cysteine ligase type 1 family. Type 1 subfamily.

It carries out the reaction L-cysteine + L-glutamate + ATP = gamma-L-glutamyl-L-cysteine + ADP + phosphate + H(+). Its pathway is sulfur metabolism; glutathione biosynthesis; glutathione from L-cysteine and L-glutamate: step 1/2. In Pseudomonas putida (strain W619), this protein is Glutamate--cysteine ligase.